The primary structure comprises 461 residues: tRNA(Ile)-lysidine synthase (461 aa).

26–31 provides a ligand contact to ATP; the sequence is SGGPDS.

This sequence belongs to the tRNA(Ile)-lysidine synthase family.

The protein localises to the cytoplasm. It catalyses the reaction cytidine(34) in tRNA(Ile2) + L-lysine + ATP = lysidine(34) in tRNA(Ile2) + AMP + diphosphate + H(+). In terms of biological role, ligates lysine onto the cytidine present at position 34 of the AUA codon-specific tRNA(Ile) that contains the anticodon CAU, in an ATP-dependent manner. Cytidine is converted to lysidine, thus changing the amino acid specificity of the tRNA from methionine to isoleucine. The sequence is that of tRNA(Ile)-lysidine synthase from Clostridium acetobutylicum (strain ATCC 824 / DSM 792 / JCM 1419 / IAM 19013 / LMG 5710 / NBRC 13948 / NRRL B-527 / VKM B-1787 / 2291 / W).